The primary structure comprises 408 residues: Arginine biosynthesis bifunctional protein ArgJ (408 aa).

Residues threonine 162, lysine 188, threonine 199, glutamate 280, asparagine 403, and serine 408 each coordinate substrate. The active-site Nucleophile is threonine 199.

Belongs to the ArgJ family. In terms of assembly, heterotetramer of two alpha and two beta chains.

It is found in the cytoplasm. The enzyme catalyses N(2)-acetyl-L-ornithine + L-glutamate = N-acetyl-L-glutamate + L-ornithine. It carries out the reaction L-glutamate + acetyl-CoA = N-acetyl-L-glutamate + CoA + H(+). The protein operates within amino-acid biosynthesis; L-arginine biosynthesis; L-ornithine and N-acetyl-L-glutamate from L-glutamate and N(2)-acetyl-L-ornithine (cyclic): step 1/1. Its pathway is amino-acid biosynthesis; L-arginine biosynthesis; N(2)-acetyl-L-ornithine from L-glutamate: step 1/4. Catalyzes two activities which are involved in the cyclic version of arginine biosynthesis: the synthesis of N-acetylglutamate from glutamate and acetyl-CoA as the acetyl donor, and of ornithine by transacetylation between N(2)-acetylornithine and glutamate. The chain is Arginine biosynthesis bifunctional protein ArgJ from Ruegeria pomeroyi (strain ATCC 700808 / DSM 15171 / DSS-3) (Silicibacter pomeroyi).